Here is an 851-residue protein sequence, read N- to C-terminus: Glutathione transporter 1 (851 aa).

Residues 1–14 (MTARNSASIPTSIR) are compositionally biased toward polar residues. Residues 1-116 (MTARNSASIP…LDNETDSEVE (116 aa)) form a disordered region. Asn32 is a glycosylation site (N-linked (GlcNAc...) asparagine). The segment covering 33–68 (LSTKTASKTSLTFRQSSSDESTSSYSGNHHNINIQH) has biased composition (low complexity). Polar residues predominate over residues 74-92 (FRTNSSSFSPNDYSISESP). Asn77 is a glycosylation site (N-linked (GlcNAc...) asparagine). Ser93 is subject to Phosphoserine. Positions 105 to 134 (VQLDNETDSEVESEVEELERELEAIEDSVY) form a coiled coil. An N-linked (GlcNAc...) asparagine glycan is attached at Asn109. The next 2 helical transmembrane spans lie at 156–176 (TWVL…FFSL) and 179–199 (PALS…GKLL). Asn256 carries an N-linked (GlcNAc...) asparagine glycan. 4 consecutive transmembrane segments (helical) span residues 259–279 (WGYK…FAGL), 282–302 (RWIV…TVLF), 333–353 (FFAY…FIFK), and 405–425 (WVIC…VPIL). N-linked (GlcNAc...) asparagine glycosylation is found at Asn452 and Asn464. Helical transmembrane passes span 480–500 (YSMS…HCAL), 531–551 (APQW…IFTV), 560–580 (VWAL…QGVL), 592–612 (IITE…NLMI), and 642–662 (ILFF…VAVQ). Asn691 carries an N-linked (GlcNAc...) asparagine glycan. 3 helical membrane-spanning segments follow: residues 711 to 731 (YYPL…TWGL), 757 to 777 (PATG…NYVI), and 791 to 811 (VLAA…FLCV). N-linked (GlcNAc...) asparagine glycosylation is present at Asn843.

The protein belongs to the oligopeptide OPT transporter family.

It localises to the endoplasmic reticulum membrane. Its subcellular location is the cell membrane. Functionally, high-affinity glutathione transporter which plays a role in scavenging glutathione from the extracellular environment for the maintenance of sulfur homeostasis. The chain is Glutathione transporter 1 (pgt1) from Schizosaccharomyces pombe (strain 972 / ATCC 24843) (Fission yeast).